The following is a 123-amino-acid chain: Large ribosomal subunit protein bL12 (123 aa).

This sequence belongs to the bacterial ribosomal protein bL12 family. Homodimer. Part of the ribosomal stalk of the 50S ribosomal subunit. Forms a multimeric L10(L12)X complex, where L10 forms an elongated spine to which 2 to 4 L12 dimers bind in a sequential fashion. Binds GTP-bound translation factors.

Functionally, forms part of the ribosomal stalk which helps the ribosome interact with GTP-bound translation factors. Is thus essential for accurate translation. This is Large ribosomal subunit protein bL12 from Bartonella bacilliformis (strain ATCC 35685 / KC583 / Herrer 020/F12,63).